We begin with the raw amino-acid sequence, 253 residues long: Small ribosomal subunit protein uS3 (253 aa).

The region spanning 39-107 is the KH type-2 domain; it reads VRRALKKRLY…EVHLNIVEIR (69 aa). The tract at residues 215 to 253 is disordered; the sequence is LDKRLAGESGPAGEGGGRERGDRPDRGPRRERRGEPSNA. Residues 230–253 are compositionally biased toward basic and acidic residues; the sequence is GGRERGDRPDRGPRRERRGEPSNA.

Belongs to the universal ribosomal protein uS3 family. In terms of assembly, part of the 30S ribosomal subunit. Forms a tight complex with proteins S10 and S14.

Binds the lower part of the 30S subunit head. Binds mRNA in the 70S ribosome, positioning it for translation. This is Small ribosomal subunit protein uS3 from Phenylobacterium zucineum (strain HLK1).